Reading from the N-terminus, the 361-residue chain is D-alanine--D-alanine ligase (361 aa).

The 211-residue stretch at 134-344 folds into the ATP-grasp domain; it reads KLLLKSFNIP…FKDLIDNLID (211 aa). 167–222 contacts ATP; that stretch reads KEVLGYPVIVKPAVLGSSIGINVAYSENQIESCIEEALKYDLTIVIEKFIEAREIE. The Mg(2+) site is built by Asp297, Glu311, and Asn313.

This sequence belongs to the D-alanine--D-alanine ligase family. Mg(2+) is required as a cofactor. It depends on Mn(2+) as a cofactor.

Its subcellular location is the cytoplasm. The enzyme catalyses 2 D-alanine + ATP = D-alanyl-D-alanine + ADP + phosphate + H(+). It functions in the pathway cell wall biogenesis; peptidoglycan biosynthesis. Cell wall formation. The polypeptide is D-alanine--D-alanine ligase (Borreliella afzelii (strain PKo) (Borrelia afzelii)).